The primary structure comprises 430 residues: Tol-Pal system protein TolB (430 aa).

An N-terminal signal peptide occupies residues 1 to 26; it reads MSLMTKLGLRTLVASCLIAVGGAAHA.

Belongs to the TolB family. In terms of assembly, the Tol-Pal system is composed of five core proteins: the inner membrane proteins TolA, TolQ and TolR, the periplasmic protein TolB and the outer membrane protein Pal. They form a network linking the inner and outer membranes and the peptidoglycan layer.

The protein resides in the periplasm. Its function is as follows. Part of the Tol-Pal system, which plays a role in outer membrane invagination during cell division and is important for maintaining outer membrane integrity. This is Tol-Pal system protein TolB from Paraburkholderia phytofirmans (strain DSM 17436 / LMG 22146 / PsJN) (Burkholderia phytofirmans).